The sequence spans 366 residues: Chorismate synthase (366 aa).

Residues Arg-48 and Arg-54 each contribute to the NADP(+) site. FMN contacts are provided by residues 125–127, 238–239, Gly-278, 293–297, and Arg-319; these read RSS, NA, and KPTSS.

The protein belongs to the chorismate synthase family. In terms of assembly, homotetramer. It depends on FMNH2 as a cofactor.

The catalysed reaction is 5-O-(1-carboxyvinyl)-3-phosphoshikimate = chorismate + phosphate. The protein operates within metabolic intermediate biosynthesis; chorismate biosynthesis; chorismate from D-erythrose 4-phosphate and phosphoenolpyruvate: step 7/7. Its function is as follows. Catalyzes the anti-1,4-elimination of the C-3 phosphate and the C-6 proR hydrogen from 5-enolpyruvylshikimate-3-phosphate (EPSP) to yield chorismate, which is the branch point compound that serves as the starting substrate for the three terminal pathways of aromatic amino acid biosynthesis. This reaction introduces a second double bond into the aromatic ring system. The polypeptide is Chorismate synthase (Ralstonia nicotianae (strain ATCC BAA-1114 / GMI1000) (Ralstonia solanacearum)).